Reading from the N-terminus, the 230-residue chain is Cytochrome c oxidase subunit 2 (230 aa).

The Mitochondrial intermembrane segment spans residues 1–14; sequence MAHPTQLGFQDAAS. Residues 15 to 45 form a helical membrane-spanning segment; it reads PVMEELLHFHDHALMIVFLISTLVLYIIIAM. Topologically, residues 46-59 are mitochondrial matrix; sequence VSTKLTNKYILDSQ. A helical membrane pass occupies residues 60 to 87; the sequence is EIEIVWTILPAVILVLIALPSLRILYLM. Over 88 to 230 the chain is Mitochondrial intermembrane; that stretch reads DEINDPHLTI…NWSSLMLEDA (143 aa). Residues H161, C196, E198, C200, H204, and M207 each coordinate Cu cation. Residue E198 participates in Mg(2+) binding.

This sequence belongs to the cytochrome c oxidase subunit 2 family. Component of the cytochrome c oxidase (complex IV, CIV), a multisubunit enzyme composed of 14 subunits. The complex is composed of a catalytic core of 3 subunits MT-CO1, MT-CO2 and MT-CO3, encoded in the mitochondrial DNA, and 11 supernumerary subunits COX4I, COX5A, COX5B, COX6A, COX6B, COX6C, COX7A, COX7B, COX7C, COX8 and NDUFA4, which are encoded in the nuclear genome. The complex exists as a monomer or a dimer and forms supercomplexes (SCs) in the inner mitochondrial membrane with NADH-ubiquinone oxidoreductase (complex I, CI) and ubiquinol-cytochrome c oxidoreductase (cytochrome b-c1 complex, complex III, CIII), resulting in different assemblies (supercomplex SCI(1)III(2)IV(1) and megacomplex MCI(2)III(2)IV(2)). Found in a complex with TMEM177, COA6, COX18, COX20, SCO1 and SCO2. Interacts with TMEM177 in a COX20-dependent manner. Interacts with COX20. Interacts with COX16. The cofactor is Cu cation.

It localises to the mitochondrion inner membrane. It carries out the reaction 4 Fe(II)-[cytochrome c] + O2 + 8 H(+)(in) = 4 Fe(III)-[cytochrome c] + 2 H2O + 4 H(+)(out). Functionally, component of the cytochrome c oxidase, the last enzyme in the mitochondrial electron transport chain which drives oxidative phosphorylation. The respiratory chain contains 3 multisubunit complexes succinate dehydrogenase (complex II, CII), ubiquinol-cytochrome c oxidoreductase (cytochrome b-c1 complex, complex III, CIII) and cytochrome c oxidase (complex IV, CIV), that cooperate to transfer electrons derived from NADH and succinate to molecular oxygen, creating an electrochemical gradient over the inner membrane that drives transmembrane transport and the ATP synthase. Cytochrome c oxidase is the component of the respiratory chain that catalyzes the reduction of oxygen to water. Electrons originating from reduced cytochrome c in the intermembrane space (IMS) are transferred via the dinuclear copper A center (CU(A)) of subunit 2 and heme A of subunit 1 to the active site in subunit 1, a binuclear center (BNC) formed by heme A3 and copper B (CU(B)). The BNC reduces molecular oxygen to 2 water molecules using 4 electrons from cytochrome c in the IMS and 4 protons from the mitochondrial matrix. In Carassius auratus (Goldfish), this protein is Cytochrome c oxidase subunit 2 (mt-co2).